The primary structure comprises 308 residues: MAPVAAPSTSQPAGGKPMNWADEFDEPVVGDAPRIEERDEGNGVKVVIEYRTNPDGKKIKITRRVKRTLVKTKVNHEVAERKTWTKFGQEKGKAAGPHSATTTIGENVVLKMSAGNKTAEPEVDDMDKMRQQLANKRIVCRLCKGDHFTTKCPYKDTLEAIPGAGADTPEGGDGSMTPLAGMDPTNPAVAASAGGKYVPPSMRGGAKGPGEKMGGLGGMSRDDLPTLRVTNLSEDADDDDLRELFMRFGRVVRVYVGRDRETGICKGYAFVSFENREDADRARQKVDGRGYDNLILSCQWSLPRGERP.

Residues 1–23 (MAPVAAPSTSQPAGGKPMNWADE) are disordered. The RRM domain occupies 225–303 (PTLRVTNLSE…LILSCQWSLP (79 aa)).

The protein belongs to the eIF-3 subunit G family. Component of the eukaryotic translation initiation factor 3 (eIF-3) complex.

The protein resides in the cytoplasm. RNA-binding component of the eukaryotic translation initiation factor 3 (eIF-3) complex, which is involved in protein synthesis of a specialized repertoire of mRNAs and, together with other initiation factors, stimulates binding of mRNA and methionyl-tRNAi to the 40S ribosome. The eIF-3 complex specifically targets and initiates translation of a subset of mRNAs involved in cell proliferation. This subunit can bind 18S rRNA. This chain is Eukaryotic translation initiation factor 3 subunit G, found in Mycosarcoma maydis (Corn smut fungus).